Consider the following 320-residue polypeptide: Protein EI24 homolog (320 aa).

A run of 3 helical transmembrane segments spans residues 41–61 (QCFLLNGLIFLGSLGVFKWFI), 94–114 (GLLQLFYVFWFYPLYMLSFIL), and 175–195 (ILLLTFFFLEVCVVGVIPYIG). Asparagine 217 is a glycosylation site (N-linked (GlcNAc...) asparagine). 3 helical membrane passes run 227–247 (LDFFQSNWAFFAGFGSPCVLA), 248–268 (IFFLSPLVSGALMAILFPLFV), and 292–312 (LGKLPIFYIADTLSMLALSIF).

The protein belongs to the EI24 (TC 9.B.7) family.

It localises to the membrane. This Arabidopsis thaliana (Mouse-ear cress) protein is Protein EI24 homolog.